Reading from the N-terminus, the 532-residue chain is Telomerase Cajal body protein 1 (532 aa).

The disordered stretch occupies residues 1–48 (MKTSEELRLAPDSLPSDLVPAPVLQASPADKNTDSEPVPPPCGGDDQL). Phosphoserine is present on residues Ser-27, Ser-61, and Ser-83. Positions 83–115 (SPRIEEQEVPENASLPVEETNRPELESGEAMEG) are disordered. 6 WD repeats span residues 151–190 (RSEN…YSES), 206–251 (EGDT…LRAS), 256–297 (NHLD…RDCE), 307–348 (GQSG…ALLG), 349–389 (GHQG…HLLW), and 395–434 (VTTN…SDCK). Thr-474 bears the Phosphothreonine mark. Ser-476 carries the post-translational modification Phosphoserine. The segment at 505 to 532 (CGGGPDPSNPDEDQDEKGQGRTEAVGMS) is disordered.

This sequence belongs to the TCAB1 family. Component of the telomerase holoenzyme complex composed of one molecule of TERT, one molecule of WRAP53/TCAB1, two molecules of H/ACA ribonucleoprotein complex subunits DKC1, NOP10, NHP2 and GAR1, and a telomerase RNA template component (TERC). The telomerase holoenzyme complex is associated with TEP1, SMG6/EST1A and POT1. Interacts with the chaperonin-containing T-complex (TRiC) complex; which mediates the folding of WRAP53/TCAB1. Interacts with COIL. Interacts with SMN1. Interacts with RNF8. Interacts with histone H2AX. Post-translationally, phosphorylated at Ser-61 by ATM in response to DNA damage, promoting its interaction with histone H2AX and localization to sites of DNA double-strand breaks.

The protein resides in the nucleus. Its subcellular location is the cajal body. It is found in the chromosome. The protein localises to the telomere. Functionally, RNA chaperone that plays a key role in telomere maintenance and RNA localization to Cajal bodies. Specifically recognizes and binds the Cajal body box (CAB box) present in both small Cajal body RNAs (scaRNAs) and telomerase RNA template component (TERC). Essential component of the telomerase holoenzyme complex, a ribonucleoprotein complex essential for the replication of chromosome termini that elongates telomeres in most eukaryotes. In the telomerase holoenzyme complex, required to stimulate the catalytic activity of the complex. Acts by specifically binding the CAB box of the TERC RNA and controlling the folding of the CR4/CR5 region of the TERC RNA, a critical step for telomerase activity. In addition, also controls telomerase holoenzyme complex localization to Cajal body. During S phase, required for delivery of TERC to telomeres during S phase and for telomerase activity. In addition to its role in telomere maintenance, also required for Cajal body formation, probably by mediating localization of scaRNAs to Cajal bodies. Also plays a role in DNA repair: phosphorylated by ATM in response to DNA damage and relocalizes to sites of DNA double-strand breaks to promote the repair of DNA double-strand breaks. Acts by recruiting the ubiquitin ligase RNF8 to DNA breaks and promote both homologous recombination (HR) and non-homologous end joining (NHEJ). The sequence is that of Telomerase Cajal body protein 1 from Rattus norvegicus (Rat).